Here is a 231-residue protein sequence, read N- to C-terminus: Protein virC1 (231 aa).

This chain is Protein virC1 (virC1), found in Rhizobium radiobacter (Agrobacterium tumefaciens).